A 558-amino-acid chain; its full sequence is Formate--tetrahydrofolate ligase (558 aa).

67-74 (TPAGEGKT) contacts ATP.

Belongs to the formate--tetrahydrofolate ligase family.

The enzyme catalyses (6S)-5,6,7,8-tetrahydrofolate + formate + ATP = (6R)-10-formyltetrahydrofolate + ADP + phosphate. It functions in the pathway one-carbon metabolism; tetrahydrofolate interconversion. The chain is Formate--tetrahydrofolate ligase from Ruegeria sp. (strain TM1040) (Silicibacter sp.).